The following is a 75-amino-acid chain: Large ribosomal subunit protein uL29 (75 aa).

This sequence belongs to the universal ribosomal protein uL29 family.

The protein is Large ribosomal subunit protein uL29 of Nostoc punctiforme (strain ATCC 29133 / PCC 73102).